Reading from the N-terminus, the 394-residue chain is MSKETFQRNKPHINIGTIGHVDHGKTTLTAAITRALSGDGLASFRDYSSIDNTPEEKARGITINASHVEYETPNRHYAHVDCPGHADYVKNMITGAAQMDGAILVVSATDGAMPQTKEHILLARQVGVPYIVVFLNKVDMISQEDAELIDLVEMELSELLEEKGYKGCPIIRGSALKALEGDANYIEKVRELMQAVDDNIPTPEREIDKPFLMPIEDVFSISGRGTVVTGRIERGIVKVSDKVQLVGLGETKETIVTGVEMFRKELPEGRAGENVGLLLRGIGKNDVERGMVVCQPNSVKPHTKFKSAVYVLQKEEGGRHKPFFSGYRPQFFFRTTDVTGVVTLPEGTEMVMPGDNVELDVELIGTVALEEGMRFAIREGGRTIGAGTISKINA.

Positions 10–204 constitute a tr-type G domain; sequence KPHINIGTIG…AVDDNIPTPE (195 aa). The interval 19–26 is G1; sequence GHVDHGKT. GTP is bound at residue 19–26; that stretch reads GHVDHGKT. Thr26 lines the Mg(2+) pocket. Residues 60–64 form a G2 region; it reads GITIN. Positions 81-84 are G3; sequence DCPG. Residues 81–85 and 136–139 each bind GTP; these read DCPGH and NKVD. A G4 region spans residues 136–139; the sequence is NKVD. The tract at residues 174-176 is G5; that stretch reads SAL.

Belongs to the TRAFAC class translation factor GTPase superfamily. Classic translation factor GTPase family. EF-Tu/EF-1A subfamily. As to quaternary structure, monomer.

Its subcellular location is the cytoplasm. The catalysed reaction is GTP + H2O = GDP + phosphate + H(+). Functionally, GTP hydrolase that promotes the GTP-dependent binding of aminoacyl-tRNA to the A-site of ribosomes during protein biosynthesis. This chain is Elongation factor Tu, found in Chlamydia pneumoniae (Chlamydophila pneumoniae).